Consider the following 222-residue polypeptide: Vacuolar protein sorting-associated protein 2 homolog 2 (222 aa).

Coiled-coil stretches lie at residues 26–83 (RGIE…AQIR) and 143–222 (SEAI…LRRI). A disordered region spans residues 179–222 (SSAPKGRIATKTAAPPASTAATNKNSESSEVDELEKRLASLRRI). Low complexity predominate over residues 187–203 (ATKTAAPPASTAATNKN).

The protein belongs to the SNF7 family. Component of the endosomal sorting required for transport complex III (ESCRT-III), composed at least of VPS2, VPS20, VPS24 and VPS32. Interacts with CHMP1A, CHMP1B and VPS60-1.

It localises to the endosome. Its function is as follows. Component of the ESCRT-III complex, which is required for multivesicular bodies (MVBs) formation and sorting of endosomal cargo proteins into MVBs. The ESCRT-III complex is probably involved in the concentration of MVB cargo. The protein is Vacuolar protein sorting-associated protein 2 homolog 2 (VPS2.2) of Arabidopsis thaliana (Mouse-ear cress).